The sequence spans 949 residues: Translation initiation factor IF-2 (949 aa).

2 disordered regions span residues 50-206 (FTEK…GAAR) and 220-359 (QNAE…TERK). Composition is skewed to basic and acidic residues over residues 52-84 (EKPK…KVEK) and 104-143 (FKAE…DQGS). Polar residues-rich tracts occupy residues 144 to 154 (KNRNFNKSQGQ) and 164 to 180 (GSQQ…SNKP). Residues 187 to 206 (NAANRNQNNSQQERQVGAAR) show a composition bias toward low complexity. Basic and acidic residues predominate over residues 224–275 (YMRHKETQLREQEEARRLAERAKEEARLAAQKAAEEKAKEAEKAAKTERFEP). Residues 319–336 (KSWNNQNQVRNQRNSNWN) are compositionally biased toward low complexity. The region spanning 450 to 619 (ERAPVVTIMG…LLVAEVEELK (170 aa)) is the tr-type G domain. Residues 459–466 (GHVDHGKT) are G1. A GTP-binding site is contributed by 459–466 (GHVDHGKT). Residues 484-488 (GITQH) form a G2 region. Residues 505 to 508 (DTPG) are G3. Residues 505-509 (DTPGH) and 559-562 (NKID) each bind GTP. Residues 559–562 (NKID) form a G4 region. The tract at residues 595–597 (SAK) is G5.

The protein belongs to the TRAFAC class translation factor GTPase superfamily. Classic translation factor GTPase family. IF-2 subfamily.

Its subcellular location is the cytoplasm. In terms of biological role, one of the essential components for the initiation of protein synthesis. Protects formylmethionyl-tRNA from spontaneous hydrolysis and promotes its binding to the 30S ribosomal subunits. Also involved in the hydrolysis of GTP during the formation of the 70S ribosomal complex. The polypeptide is Translation initiation factor IF-2 (Streptococcus uberis (strain ATCC BAA-854 / 0140J)).